Consider the following 170-residue polypeptide: Methanogen homoaconitase small subunit (170 aa).

The YLRT signature appears at 24–27; it reads YLRT.

It belongs to the LeuD family. LeuD type 2 subfamily. In terms of assembly, heterotetramer of 2 HacA and 2 HacB proteins. Cannot form a complex with LeuC.

It catalyses the reaction (2R)-homocitrate = (2R,3S)-homoisocitrate. The catalysed reaction is (2R)-homocitrate = cis-homoaconitate + H2O. It carries out the reaction (2R,3S)-homoisocitrate = cis-homoaconitate + H2O. The enzyme catalyses cis-(homo)2aconitate + H2O = (2R,3S)-iso(homo)2citrate. It catalyses the reaction cis-(homo)3aconitate + H2O = (2R,3S)-iso(homo)3citrate. The catalysed reaction is (R)-malate = maleate + H2O. It carries out the reaction cis-aconitate + H2O = D-threo-isocitrate. It functions in the pathway organic acid metabolism; 2-oxosuberate biosynthesis. Functionally, component of a hydro-lyase with broad substrate specificity for cis-unsaturated tricarboxylic acids. Catalyzes both the reversible dehydration of (R)-homocitrate ((R)-2-hydroxybutane-1,2,4-tricarboxylate) to produce cis-homoaconitate ((Z)-but-1-ene-1,2,4-tricarboxylate), and its hydration to homoisocitrate ((1R,2S)-1-hydroxybutane-1,2,4-tricarboxylate). Is also able to hydrate the analogous longer chain substrates cis-homo(2)-aconitate, cis-homo(3)-aconitate, and even the non-physiological cis-homo(4)-aconitate with similar efficiency. These reactions are part of the biosynthesis pathway of coenzyme B. Can also catalyze the hydration of maleate to (R)-malate, and that of cis-aconitate. Cannot catalyze the hydration of citraconate and the dehydration of (S)-homocitrate, citramalate, 2-isopropylmalate, 3-isopropylmalate, citrate or threo-DL-isocitrate. The polypeptide is Methanogen homoaconitase small subunit (hacB) (Methanocaldococcus jannaschii (strain ATCC 43067 / DSM 2661 / JAL-1 / JCM 10045 / NBRC 100440) (Methanococcus jannaschii)).